Reading from the N-terminus, the 475-residue chain is Pyruvate kinase (475 aa).

Arginine 33 is a binding site for substrate. The K(+) site is built by asparagine 35, serine 37, and aspartate 67. Residue 35-38 (NFSH) coordinates ATP. 2 residues coordinate ATP: arginine 74 and lysine 155. Mg(2+) is bound at residue glutamate 220. Glycine 243, aspartate 244, and threonine 276 together coordinate substrate. Residue aspartate 244 participates in Mg(2+) binding.

It belongs to the pyruvate kinase family. In terms of assembly, homotetramer. Mg(2+) serves as cofactor. Requires K(+) as cofactor.

It carries out the reaction pyruvate + ATP = phosphoenolpyruvate + ADP + H(+). Its pathway is carbohydrate degradation; glycolysis; pyruvate from D-glyceraldehyde 3-phosphate: step 5/5. The polypeptide is Pyruvate kinase (pyk) (Corynebacterium glutamicum (strain ATCC 13032 / DSM 20300 / JCM 1318 / BCRC 11384 / CCUG 27702 / LMG 3730 / NBRC 12168 / NCIMB 10025 / NRRL B-2784 / 534)).